Here is a 512-residue protein sequence, read N- to C-terminus: Nuclear fusion protein FUS1 (512 aa).

A helical transmembrane segment spans residues 72–96 (IGLSIGLPIGIFCFGLLILLCYFYL). The segment at 97–512 (KRNSVSISNP…VPGDCLQEYD (416 aa)) is hydrophilic. Thr-178 carries the post-translational modification Phosphothreonine. Phosphoserine is present on residues Ser-190 and Ser-256. A phosphothreonine mark is found at Thr-281 and Thr-424. The region spanning 436-512 (QLGKTYTVIQ…VPGDCLQEYD (77 aa)) is the SH3 domain.

In terms of processing, O-glycosylated.

The protein localises to the membrane. Its function is as follows. Required for cell fusion. Negatively regulates Sho1p signaling to ensure efficient cell fusion. Interacts with SHO1. The protein is Nuclear fusion protein FUS1 (FUS1) of Saccharomyces cerevisiae (strain ATCC 204508 / S288c) (Baker's yeast).